The primary structure comprises 297 residues: Phosphatidylinositol N-acetylglucosaminyltransferase subunit C (297 aa).

8 helical membrane passes run 51 to 71 (VVFE…FVVI), 80 to 100 (LAPH…YVLF), 117 to 137 (WADL…SPVL), 153 to 173 (SVFM…AAIV), 174 to 194 (SSTL…SRLP), 196 to 216 (SLHA…WPML), 227 to 244 (SYVG…GGLL), and 250 to 270 (GAVL…FYLI).

It belongs to the PIGC family. Component of the glycosylphosphatidylinositol-N-acetylglucosaminyltransferase (GPI-GnT) complex composed at least by PIGA, PIGC, PIGH, PIGP, PIGQ, PIGY and DPM2. Interacts with PIGQ. Interacts with the heterodimer PIGA:PIGH.

Its subcellular location is the endoplasmic reticulum membrane. It functions in the pathway glycolipid biosynthesis; glycosylphosphatidylinositol-anchor biosynthesis. Its function is as follows. Part of the glycosylphosphatidylinositol-N-acetylglucosaminyltransferase (GPI-GnT) complex that catalyzes the transfer of N-acetylglucosamine from UDP-N-acetylglucosamine to phosphatidylinositol and participates in the first step of GPI biosynthesis. In Homo sapiens (Human), this protein is Phosphatidylinositol N-acetylglucosaminyltransferase subunit C.